Reading from the N-terminus, the 87-residue chain is Small ribosomal subunit protein bS20 (87 aa).

The span at 1–11 (MANIKSAKKRA) shows a compositional bias: basic residues. The segment at 1–27 (MANIKSAKKRAVQSEKRRQHNASQRSM) is disordered.

It belongs to the bacterial ribosomal protein bS20 family.

Binds directly to 16S ribosomal RNA. This chain is Small ribosomal subunit protein bS20, found in Haemophilus influenzae (strain PittEE).